The sequence spans 376 residues: Queuine tRNA-ribosyltransferase (376 aa).

Catalysis depends on aspartate 90, which acts as the Proton acceptor. Residues 90 to 94, aspartate 144, glutamine 193, and glycine 220 each bind substrate; that span reads DSGGF. The interval 251–257 is RNA binding; sequence GVGTPED. Catalysis depends on aspartate 270, which acts as the Nucleophile. Residues 275-279 are RNA binding; important for wobble base 34 recognition; the sequence is TRNAR. Positions 308, 310, 313, and 339 each coordinate Zn(2+).

The protein belongs to the queuine tRNA-ribosyltransferase family. Homodimer. Within each dimer, one monomer is responsible for RNA recognition and catalysis, while the other monomer binds to the replacement base PreQ1. Requires Zn(2+) as cofactor.

It catalyses the reaction 7-aminomethyl-7-carbaguanine + guanosine(34) in tRNA = 7-aminomethyl-7-carbaguanosine(34) in tRNA + guanine. It participates in tRNA modification; tRNA-queuosine biosynthesis. Catalyzes the base-exchange of a guanine (G) residue with the queuine precursor 7-aminomethyl-7-deazaguanine (PreQ1) at position 34 (anticodon wobble position) in tRNAs with GU(N) anticodons (tRNA-Asp, -Asn, -His and -Tyr). Catalysis occurs through a double-displacement mechanism. The nucleophile active site attacks the C1' of nucleotide 34 to detach the guanine base from the RNA, forming a covalent enzyme-RNA intermediate. The proton acceptor active site deprotonates the incoming PreQ1, allowing a nucleophilic attack on the C1' of the ribose to form the product. After dissociation, two additional enzymatic reactions on the tRNA convert PreQ1 to queuine (Q), resulting in the hypermodified nucleoside queuosine (7-(((4,5-cis-dihydroxy-2-cyclopenten-1-yl)amino)methyl)-7-deazaguanosine). This Cupriavidus metallidurans (strain ATCC 43123 / DSM 2839 / NBRC 102507 / CH34) (Ralstonia metallidurans) protein is Queuine tRNA-ribosyltransferase.